Reading from the N-terminus, the 431-residue chain is Histidine--tRNA ligase (431 aa).

It belongs to the class-II aminoacyl-tRNA synthetase family. Homodimer.

It is found in the cytoplasm. The enzyme catalyses tRNA(His) + L-histidine + ATP = L-histidyl-tRNA(His) + AMP + diphosphate + H(+). In Ligilactobacillus salivarius (strain UCC118) (Lactobacillus salivarius), this protein is Histidine--tRNA ligase.